A 254-amino-acid polypeptide reads, in one-letter code: 5-oxoprolinase subunit A (254 aa).

This sequence belongs to the LamB/PxpA family. In terms of assembly, forms a complex composed of PxpA, PxpB and PxpC.

The catalysed reaction is 5-oxo-L-proline + ATP + 2 H2O = L-glutamate + ADP + phosphate + H(+). Catalyzes the cleavage of 5-oxoproline to form L-glutamate coupled to the hydrolysis of ATP to ADP and inorganic phosphate. This Acinetobacter baumannii (strain AB307-0294) protein is 5-oxoprolinase subunit A.